Here is a 382-residue protein sequence, read N- to C-terminus: uncharacterized protein (382 aa).

The next 12 membrane-spanning stretches (helical) occupy residues 14–34, 45–65, 75–95, 102–122, 131–151, 157–177, 204–224, 231–251, 270–290, 291–311, 325–345, and 349–369; these read GLLLLTLAIAVLNTLVLLWLA, MVSSSYFTGNLVGTLFTGYLI, YLASLIFAAGCVGLGVMVGFW, FIAGIGCAMIWVVVESALMCS, LLAAYMMVYYMGTFLGQLLVS, LLHVLPWVTGMILAGILPLLF, LGVNGCIISGIVLGSLYGLMP, GMANASIGFWMAVLVSAGILG, VQVFVVILGSIAMLTQAAMAP, ALFILGAAGFTLYPVAMAWAC, ALLLSYTVGSLLGPSFAAMLM, and SDNLLFIMIASVSFIYLLMLL.

It belongs to the major facilitator superfamily. YcaD (TC 2.A.1.26) family.

The protein localises to the cell inner membrane. This is an uncharacterized protein from Salmonella paratyphi A (strain ATCC 9150 / SARB42).